Here is a 217-residue protein sequence, read N- to C-terminus: Protein TNT (217 aa).

Residues 1-217 (MSLVPGQHCS…HSTKQTGGKE (217 aa)) are disordered. Composition is skewed to polar residues over residues 20-36 (SPIT…TEFS) and 45-61 (TSPQ…SQGP). 2 stretches are compositionally biased toward low complexity: residues 91 to 104 (EPSL…LQSP) and 128 to 139 (QSSESHVSSVQH). 2 stretches are compositionally biased toward polar residues: residues 177-191 (RLNT…SQLG) and 207-217 (AHSTKQTGGKE).

Preferentially expressed in teratocarcinoma rather than in normal testis.

This is Protein TNT (C16orf82) from Homo sapiens (Human).